The primary structure comprises 250 residues: Myelin basic protein (250 aa).

Basic and acidic residues predominate over residues Met1–Lys28. The disordered stretch occupies residues Met1–Ala150. Residue Gly2 is modified to N-acetylalanine. Phosphoserine is present on residues Ser31 and Ser40. Basic and acidic residues predominate over residues Phe95–Glu113. Ser96 is subject to Phosphothreonine. A Phosphoserine modification is found at Glu113. Glu122 is modified (phosphothreonine). A Phosphotyrosine modification is found at Thr125. A phosphoserine mark is found at Ala135, Arg139, Ser141, and Ser144. Phosphotyrosine occurs at positions 146 and 147. Thr149 carries the phosphothreonine modification. A Phosphoserine modification is found at Ser151. Residue Ser151 is modified to Phosphotyrosine. The residue at position 152 (Thr152) is a Phosphothreonine. Arg157 and Arg163 each carry citrulline. Thr167 is modified (phosphothreonine). Ser172 carries the phosphoserine modification. An omega-N-methylarginine mark is found at Arg175 and Arg181. The tract at residues Arg175–Arg250 is disordered. Phosphoserine is present on Ser188. Thr197 is subject to Phosphothreonine. Residues Thr197–Ser206 show a composition bias toward polar residues. Phosphotyrosine is present on Tyr199. Ser206 is subject to Phosphoserine. Phosphothreonine is present on residues Thr211, Thr226, and Thr229. A Deamidated glutamine modification is found at Gln234. Arg239 carries the citrulline modification. The residue at position 241 (Ser241) is a Phosphoserine. Ser245 is subject to Phosphoserine; by UHMK1. Residue Arg250 is modified to Citrulline.

The protein belongs to the myelin basic protein family. As to quaternary structure, homodimer. As in other animals, several charge isomers may be produced as a result of optional post-translational modifications, such as phosphorylation of serine or threonine residues, deamidation of glutamine or asparagine residues, citrullination and methylation of arginine residues. Post-translationally, methylated on arginine residues; decreases with the age of the animal, making MBP more cationic. In terms of processing, phosphorylated by TAOK2, VRK2, MAPK11, MAPK12, MAPK14 and MINK1. Proteolytically cleaved in B cell lysosomes by cathepsin CTSG which degrades the major immunogenic MBP epitope and prevents the activation of MBP-specific autoreactive T cells. In terms of tissue distribution, in the embryo, isoform 1-isoform 3 are found in neurons within the central nervous system (primarily in pioneer neurons important in the formation of the cortex) and the peripheral nervous system. They are also expressed in the thymus, gut, lung and kidney. In the adult, isoform 1-isoform 3 are highly expressed in the brain (mainly in brain regions rich in oligodendrocytes) and spleen. Lower levels are seen in the heart, kidney and lung. Isoform 2 is also found in cells of the immune system. The isoforms missing the 134 first amino acids (isoform 4-isoform 13) are almost exclusively produced in the myelin-forming cells, the mature oligodendrocytes.

Its subcellular location is the myelin membrane. It is found in the cytoplasm. It localises to the nucleus. The classic group of MBP isoforms (isoform 4-isoform 13) are with PLP the most abundant protein components of the myelin membrane in the CNS. They have a role in both its formation and stabilization. The non-classic group of MBP isoforms (isoform 1-isoform 3/Golli-MBPs) may preferentially have a role in the early developing brain long before myelination, maybe as components of transcriptional complexes, and may also be involved in signaling pathways in T-cells and neural cells. Differential splicing events combined to optional post-translational modifications give a wide spectrum of isomers, with each of them potentially having a specialized function. This is Myelin basic protein (Mbp) from Mus musculus (Mouse).